We begin with the raw amino-acid sequence, 90 residues long: Small ribosomal subunit protein bS20 (90 aa).

It belongs to the bacterial ribosomal protein bS20 family.

Its function is as follows. Binds directly to 16S ribosomal RNA. In Roseiflexus sp. (strain RS-1), this protein is Small ribosomal subunit protein bS20.